Here is a 328-residue protein sequence, read N- to C-terminus: Ribosomal RNA small subunit methyltransferase H (328 aa).

S-adenosyl-L-methionine is bound by residues Gly-35–His-37, Asp-60, Phe-87, Asp-113, and Gln-120.

The protein belongs to the methyltransferase superfamily. RsmH family.

The protein localises to the cytoplasm. It catalyses the reaction cytidine(1402) in 16S rRNA + S-adenosyl-L-methionine = N(4)-methylcytidine(1402) in 16S rRNA + S-adenosyl-L-homocysteine + H(+). Specifically methylates the N4 position of cytidine in position 1402 (C1402) of 16S rRNA. The polypeptide is Ribosomal RNA small subunit methyltransferase H (Chlorobium chlorochromatii (strain CaD3)).